Here is a 454-residue protein sequence, read N- to C-terminus: Phosphoglucosamine mutase (454 aa).

Residue Ser101 is the Phosphoserine intermediate of the active site. Residues Ser101, Asp243, Asp245, and Asp247 each coordinate Mg(2+). Ser101 is subject to Phosphoserine.

The protein belongs to the phosphohexose mutase family. It depends on Mg(2+) as a cofactor. Activated by phosphorylation.

The catalysed reaction is alpha-D-glucosamine 1-phosphate = D-glucosamine 6-phosphate. In terms of biological role, catalyzes the conversion of glucosamine-6-phosphate to glucosamine-1-phosphate. The sequence is that of Phosphoglucosamine mutase from Geotalea daltonii (strain DSM 22248 / JCM 15807 / FRC-32) (Geobacter daltonii).